We begin with the raw amino-acid sequence, 189 residues long: Transcription factor FapR (189 aa).

This sequence belongs to the FapR family.

Its function is as follows. Transcriptional factor involved in regulation of membrane lipid biosynthesis by repressing genes involved in fatty acid and phospholipid metabolism. The chain is Transcription factor FapR from Listeria monocytogenes serotype 4a (strain HCC23).